We begin with the raw amino-acid sequence, 288 residues long: Solute carrier family 25 member 45 (288 aa).

3 Solcar repeats span residues Met1 to Ala83, Pro97 to Gln191, and Pro199 to Leu286. Transmembrane regions (helical) follow at residues Phe6–Val26, Gly58–Ser78, Ile102–Leu122, Gly166–Glu186, Ala202–Phe222, and Ser266–Leu286.

It belongs to the mitochondrial carrier (TC 2.A.29) family. Widely expressed, with highest levels in testis, liver and kidney and low levels in brain, including cortex, cerebellum, hippocampus and hypothalamus, and heart.

The protein resides in the mitochondrion inner membrane. In Mus musculus (Mouse), this protein is Solute carrier family 25 member 45 (Slc25a45).